We begin with the raw amino-acid sequence, 137 residues long: Putative pre-16S rRNA nuclease (137 aa).

This sequence belongs to the YqgF nuclease family.

Its subcellular location is the cytoplasm. In terms of biological role, could be a nuclease involved in processing of the 5'-end of pre-16S rRNA. The polypeptide is Putative pre-16S rRNA nuclease (Actinobacillus pleuropneumoniae serotype 7 (strain AP76)).